We begin with the raw amino-acid sequence, 312 residues long: Atrochrysone carboxyl ACP thioesterase AacuM (312 aa).

Zn(2+) is bound by residues His103, His105, Asp107, and His108. Asp107 (proton donor/acceptor) is an active-site residue.

The protein belongs to the metallo-beta-lactamase superfamily. It depends on Zn(2+) as a cofactor.

The catalysed reaction is atrochrysone carboxyl-[ACP] + H2O = atrochrysone carboxylate + holo-[ACP] + H(+). It participates in secondary metabolite biosynthesis. In terms of biological role, atrochrysone carboxyl ACP thioesterase; part of the gene cluster that mediates the biosynthesis of the tetrahydroxanthone dimer secalonic acid D. The pathway begins with the synthesis of atrochrysone thioester by the polyketide synthase AacuL. The atrochrysone carboxyl ACP thioesterase AacuM then breaks the thioester bond and releases the atrochrysone carboxylic acid from AacuL. Atrochrysone carboxylic acid is decarboxylated by the decarboxylase AacuI, and oxidized by the anthrone oxygenase AacuG to yield emodin. Emodin is then reduced to emodin hydroquinone by a yet unidentified oxidoreductase. A-ring reduction by the short chain dehydrogenase AacuN, dehydration by the scytalone dehydratase-like protein AacuK and probable spontaneous re-oxidation, results in overall deoxygenation to chrysophanol. Baeyer-Villiger oxidation by the Baeyer-Villiger monooxygenase (BVMO) AacuH then yields monodictyphenone. Monodictyphenone is transformed into compounds with the tetrahydroxanthone skeleton via methylesterification by the methyltransferase AacuQ, followed by the action of the flavin-dependent monooxygenase AacuC, the isomerase AacuP, and the short chain dehydrogenase/reductase AacuF or AacuD. AacuF and AacuD should accept the same compound as a substrate but perform the ketoreduction with a different stereoselectivity, thus yielding blennolides B and A, respectively. In the final step of the biosynthesis, the cytochrome P450 monooxygenase AacuE accepts blennolide B and/or blennolide A to conduct the dimerization reaction to furnish the tetrahydroxanthone dimers, secalonic acids D, B, and F. The chain is Atrochrysone carboxyl ACP thioesterase AacuM from Aspergillus aculeatus (strain ATCC 16872 / CBS 172.66 / WB 5094).